Consider the following 373-residue polypeptide: DNA replication and repair protein RecF (373 aa).

An ATP-binding site is contributed by 30–37 (GENAQGKT).

Belongs to the RecF family.

The protein resides in the cytoplasm. Its function is as follows. The RecF protein is involved in DNA metabolism; it is required for DNA replication and normal SOS inducibility. RecF binds preferentially to single-stranded, linear DNA. It also seems to bind ATP. The protein is DNA replication and repair protein RecF of Limosilactobacillus fermentum (strain NBRC 3956 / LMG 18251) (Lactobacillus fermentum).